We begin with the raw amino-acid sequence, 251 residues long: uncharacterized protein (251 aa).

Residues 3 to 118 enclose the Response regulatory domain; it reads KVIICDDERI…QLEHILDILV (116 aa). Residue Asp55 is modified to 4-aspartylphosphate. Positions 152–249 constitute an HTH araC/xylS-type domain; it reads NQILSQIKQH…HMSPSDYNKQ (98 aa). DNA-binding regions (H-T-H motif) lie at residues 169 to 190 and 216 to 239; these read LDLI…KEHV and HYEI…KKYL.

Phosphorylated by SERP2405.

It localises to the cytoplasm. Probable member of the two-component regulatory system SERP2405/SERP2406. This is an uncharacterized protein from Staphylococcus epidermidis (strain ATCC 35984 / DSM 28319 / BCRC 17069 / CCUG 31568 / BM 3577 / RP62A).